Consider the following 240-residue polypeptide: Short palate, lung and nasal epithelium carcinoma-associated protein 2B (240 aa).

The signal sequence occupies residues methionine 1 to alanine 19. Cysteine 163 and cysteine 206 are disulfide-bonded.

The protein belongs to the BPI/LBP/Plunc superfamily. Plunc family. Parotid glands.

Its subcellular location is the secreted. This Bos taurus (Bovine) protein is Short palate, lung and nasal epithelium carcinoma-associated protein 2B (SPLUNC2B).